We begin with the raw amino-acid sequence, 410 residues long: Probable protein S-acyltransferase 6 (410 aa).

2 helical membrane passes run Leu45–Ser65 and Gly76–Leu96. The interval Asn108–Pro129 is disordered. Positions Lys147–Phe197 constitute a DHHC domain. Cys177 serves as the catalytic S-palmitoyl cysteine intermediate. Transmembrane regions (helical) follow at residues Phe191–Cys211 and Ser235–Phe255. Residue Ser325 is modified to Phosphoserine.

This sequence belongs to the DHHC palmitoyltransferase family.

It is found in the cell membrane. The catalysed reaction is L-cysteinyl-[protein] + hexadecanoyl-CoA = S-hexadecanoyl-L-cysteinyl-[protein] + CoA. Functionally, palmitoyl acyltransferase. The chain is Probable protein S-acyltransferase 6 (PAT06) from Arabidopsis thaliana (Mouse-ear cress).